We begin with the raw amino-acid sequence, 458 residues long: UDP-N-acetylmuramoylalanine--D-glutamate ligase (458 aa).

Gly-124–Thr-130 contacts ATP.

Belongs to the MurCDEF family.

The protein localises to the cytoplasm. The enzyme catalyses UDP-N-acetyl-alpha-D-muramoyl-L-alanine + D-glutamate + ATP = UDP-N-acetyl-alpha-D-muramoyl-L-alanyl-D-glutamate + ADP + phosphate + H(+). It participates in cell wall biogenesis; peptidoglycan biosynthesis. Cell wall formation. Catalyzes the addition of glutamate to the nucleotide precursor UDP-N-acetylmuramoyl-L-alanine (UMA). In Clostridium botulinum (strain Loch Maree / Type A3), this protein is UDP-N-acetylmuramoylalanine--D-glutamate ligase.